A 138-amino-acid polypeptide reads, in one-letter code: Large ribosomal subunit protein uL16c (138 aa).

Belongs to the universal ribosomal protein uL16 family. In terms of assembly, part of the 50S ribosomal subunit.

Its subcellular location is the plastid. The protein resides in the chloroplast. The chain is Large ribosomal subunit protein uL16c from Tetradesmus obliquus (Green alga).